Reading from the N-terminus, the 209-residue chain is Uracil phosphoribosyltransferase (209 aa).

5-phospho-alpha-D-ribose 1-diphosphate-binding positions include R79, R104, and 131-139; that span reads DPMLATGGS. Uracil-binding positions include I194 and 199 to 201; that span reads GDA. Residue D200 coordinates 5-phospho-alpha-D-ribose 1-diphosphate.

This sequence belongs to the UPRTase family. Mg(2+) is required as a cofactor.

It catalyses the reaction UMP + diphosphate = 5-phospho-alpha-D-ribose 1-diphosphate + uracil. The protein operates within pyrimidine metabolism; UMP biosynthesis via salvage pathway; UMP from uracil: step 1/1. Allosterically activated by GTP. In terms of biological role, catalyzes the conversion of uracil and 5-phospho-alpha-D-ribose 1-diphosphate (PRPP) to UMP and diphosphate. This is Uracil phosphoribosyltransferase from Halalkalibacterium halodurans (strain ATCC BAA-125 / DSM 18197 / FERM 7344 / JCM 9153 / C-125) (Bacillus halodurans).